Reading from the N-terminus, the 225-residue chain is Uridylate kinase (225 aa).

Aspartate 6 is a binding site for Mg(2+). ATP is bound at residue 9–10 (GS). Glycine 44 contributes to the UMP binding site. Positions 45 and 49 each coordinate ATP. Residues aspartate 66 and 114–120 (THPGHTT) contribute to the UMP site. Mg(2+)-binding residues include threonine 120 and aspartate 121. ATP contacts are provided by threonine 140, asparagine 141, tyrosine 146, and aspartate 149. Residue glycine 179 participates in UMP binding. Position 182 (serine 182) interacts with Mg(2+). Serine 182 is an ATP binding site.

This sequence belongs to the UMP kinase family. In terms of assembly, homohexamer; trimer of dimers.

The protein resides in the cytoplasm. It catalyses the reaction UMP + ATP = UDP + ADP. It participates in pyrimidine metabolism; CTP biosynthesis via de novo pathway; UDP from UMP (UMPK route): step 1/1. With respect to regulation, inhibited by UTP. Functionally, catalyzes the reversible phosphorylation of UMP to UDP, with ATP as the most efficient phosphate donor. The protein is Uridylate kinase (pyrH) of Pyrococcus furiosus (strain ATCC 43587 / DSM 3638 / JCM 8422 / Vc1).